A 679-amino-acid chain; its full sequence is Glycine--tRNA ligase beta subunit (679 aa).

This sequence belongs to the class-II aminoacyl-tRNA synthetase family. Tetramer of two alpha and two beta subunits.

It is found in the cytoplasm. It carries out the reaction tRNA(Gly) + glycine + ATP = glycyl-tRNA(Gly) + AMP + diphosphate. This is Glycine--tRNA ligase beta subunit from Streptococcus pyogenes serotype M3 (strain ATCC BAA-595 / MGAS315).